The chain runs to 177 residues: Protein ParB (177 aa).

The first 26 residues, 1–26, serve as a signal peptide directing secretion; it reads MKRRSYAMLRAAAALAVLVVASPAWA. Positions 27 to 157 constitute a TNase-like domain; sequence ELRGEVVRII…RGKRVGLWSD (131 aa). Residues R53, E61, and R95 contribute to the active site.

Monomer. The cofactor is Ca(2+). Post-translationally, the N-terminus is blocked.

It localises to the secreted. Its activity is regulated as follows. Endonuclease activity is inhibited by EDTA. Its function is as follows. Involved in plasmid partition. An endonuclease that acts on supercoiled dsDNA, converting it first to open circular DNA and then linearizing it. Preferentially cleaves regions in dsDNA that are capable of forming ssDNA, such as AT-rich regions and sequences that can form cruciforms. Has poor endonucleolytic activity on linear DNA, has 5'-3' exonuclease activity on dsDNA cleaving generating 3'-phosphonucleotides. The polypeptide is Protein ParB (Escherichia coli).